The primary structure comprises 354 residues: Uroporphyrinogen decarboxylase (354 aa).

Substrate contacts are provided by residues 27-31, Asp-77, Tyr-153, Thr-208, and His-326; that span reads RQAGR.

This sequence belongs to the uroporphyrinogen decarboxylase family. Homodimer.

The protein localises to the cytoplasm. It catalyses the reaction uroporphyrinogen III + 4 H(+) = coproporphyrinogen III + 4 CO2. It participates in porphyrin-containing compound metabolism; protoporphyrin-IX biosynthesis; coproporphyrinogen-III from 5-aminolevulinate: step 4/4. Functionally, catalyzes the decarboxylation of four acetate groups of uroporphyrinogen-III to yield coproporphyrinogen-III. This is Uroporphyrinogen decarboxylase from Neisseria gonorrhoeae (strain ATCC 700825 / FA 1090).